The following is a 415-amino-acid chain: Serine hydroxymethyltransferase (415 aa).

(6S)-5,6,7,8-tetrahydrofolate is bound by residues Leu117 and 121-123 (GHL). The residue at position 226 (Lys226) is an N6-(pyridoxal phosphate)lysine.

It belongs to the SHMT family. As to quaternary structure, homodimer. Requires pyridoxal 5'-phosphate as cofactor.

Its subcellular location is the cytoplasm. It catalyses the reaction (6R)-5,10-methylene-5,6,7,8-tetrahydrofolate + glycine + H2O = (6S)-5,6,7,8-tetrahydrofolate + L-serine. Its pathway is one-carbon metabolism; tetrahydrofolate interconversion. It participates in amino-acid biosynthesis; glycine biosynthesis; glycine from L-serine: step 1/1. Functionally, catalyzes the reversible interconversion of serine and glycine with tetrahydrofolate (THF) serving as the one-carbon carrier. This reaction serves as the major source of one-carbon groups required for the biosynthesis of purines, thymidylate, methionine, and other important biomolecules. Also exhibits THF-independent aldolase activity toward beta-hydroxyamino acids, producing glycine and aldehydes, via a retro-aldol mechanism. The protein is Serine hydroxymethyltransferase of Dehalococcoides mccartyi (strain CBDB1).